The following is a 299-amino-acid chain: Acetaldehyde dehydrogenase 2 (299 aa).

C130 serves as the catalytic Acyl-thioester intermediate. Residues 161-169 and N272 each bind NAD(+); that span reads SVGPGTRKN.

The protein belongs to the acetaldehyde dehydrogenase family.

It carries out the reaction acetaldehyde + NAD(+) + CoA = acetyl-CoA + NADH + H(+). The polypeptide is Acetaldehyde dehydrogenase 2 (Burkholderia lata (strain ATCC 17760 / DSM 23089 / LMG 22485 / NCIMB 9086 / R18194 / 383)).